The chain runs to 414 residues: Arrestin domain-containing protein 3 (414 aa).

Short sequence motifs (PPxY motif) lie at residues 346 to 349 and 391 to 394; these read PPSY and PPLY. Positions 393-414 are disordered; the sequence is LYSEIDPNPDQSSEDRPSCPSR. Basic and acidic residues predominate over residues 405–414; sequence SEDRPSCPSR.

It belongs to the arrestin family. Interacts (via PPxY motifs) with NEDD4 (via WW domains). Interacts with ADRB2. Interacts with ADRB3. Interacts with HGS (via PPxY motifs). Does not bind TXN (thioredoxin). Interacts with ITCH. As to expression, detected in visceral fat, subcutaneous fat, brown fat and skeletal muscle, and at lower levels in kidney.

The protein resides in the cytoplasm. The protein localises to the cell membrane. It is found in the lysosome. Its subcellular location is the endosome. It localises to the early endosome. In terms of biological role, adapter protein that plays a role in regulating cell-surface expression of adrenergic receptors and probably also other G protein-coupled receptors. Plays a role in NEDD4-mediated ubiquitination and endocytosis af activated ADRB2 and subsequent ADRB2 degradation. May recruit NEDD4 to ADRB2. Alternatively, may function as adapter protein that does not play a major role in recruiting NEDD4 to ADRB2, but rather plays a role in a targeting ADRB2 to endosomes. The protein is Arrestin domain-containing protein 3 (Arrdc3) of Mus musculus (Mouse).